The sequence spans 245 residues: tRNA (guanine-N(1)-)-methyltransferase (245 aa).

S-adenosyl-L-methionine-binding positions include Gly-111 and Ile-131–Leu-136.

It belongs to the RNA methyltransferase TrmD family. In terms of assembly, homodimer.

The protein localises to the cytoplasm. The enzyme catalyses guanosine(37) in tRNA + S-adenosyl-L-methionine = N(1)-methylguanosine(37) in tRNA + S-adenosyl-L-homocysteine + H(+). Functionally, specifically methylates guanosine-37 in various tRNAs. The chain is tRNA (guanine-N(1)-)-methyltransferase from Staphylococcus haemolyticus (strain JCSC1435).